The sequence spans 124 residues: ATP synthase epsilon chain (124 aa).

A disordered region spans residues 97–124 (ARVREASSEEEKSRAESELRAVKRSKEK).

It belongs to the ATPase epsilon chain family. F-type ATPases have 2 components, CF(1) - the catalytic core - and CF(0) - the membrane proton channel. CF(1) has five subunits: alpha(3), beta(3), gamma(1), delta(1), epsilon(1). CF(0) has three main subunits: a, b and c.

It is found in the cell membrane. Produces ATP from ADP in the presence of a proton gradient across the membrane. This is ATP synthase epsilon chain from Corynebacterium urealyticum (strain ATCC 43042 / DSM 7109).